We begin with the raw amino-acid sequence, 225 residues long: Imidazole glycerol phosphate synthase subunit HisH (225 aa).

One can recognise a Glutamine amidotransferase type-1 domain in the interval 5–220; it reads KNVIVDTGCA…LELDSTELNQ (216 aa). The Nucleophile role is filled by C80. Active-site residues include H195 and E197.

In terms of assembly, heterodimer of HisH and HisF.

The protein resides in the cytoplasm. The catalysed reaction is 5-[(5-phospho-1-deoxy-D-ribulos-1-ylimino)methylamino]-1-(5-phospho-beta-D-ribosyl)imidazole-4-carboxamide + L-glutamine = D-erythro-1-(imidazol-4-yl)glycerol 3-phosphate + 5-amino-1-(5-phospho-beta-D-ribosyl)imidazole-4-carboxamide + L-glutamate + H(+). It catalyses the reaction L-glutamine + H2O = L-glutamate + NH4(+). It functions in the pathway amino-acid biosynthesis; L-histidine biosynthesis; L-histidine from 5-phospho-alpha-D-ribose 1-diphosphate: step 5/9. IGPS catalyzes the conversion of PRFAR and glutamine to IGP, AICAR and glutamate. The HisH subunit catalyzes the hydrolysis of glutamine to glutamate and ammonia as part of the synthesis of IGP and AICAR. The resulting ammonia molecule is channeled to the active site of HisF. In Colwellia psychrerythraea (strain 34H / ATCC BAA-681) (Vibrio psychroerythus), this protein is Imidazole glycerol phosphate synthase subunit HisH.